The following is a 616-amino-acid chain: Zinc metalloproteinase-disintegrin-like ecarin (616 aa).

The signal sequence occupies residues 1 to 20 (MIQILLVIICLAVFPYQGCS). The propeptide occupies 21–190 (IILGSGNVND…EPIKKTLGLI (170 aa)). One can recognise a Peptidase M12B domain in the interval 201–397 (KFIELVVVVD…YNPKCILDPP (197 aa)). Glu-204 is a binding site for Ca(2+). N-linked (GlcNAc...) asparagine glycans are attached at residues Asn-219 and Asn-261. Asp-288 contacts Ca(2+). N-linked (GlcNAc...) asparagine glycosylation is found at Asn-295 and Asn-326. 3 disulfides stabilise this stretch: Cys-312–Cys-392, Cys-352–Cys-376, and Cys-354–Cys-359. His-337 lines the Zn(2+) pocket. Residue Glu-338 is part of the active site. Residues His-341 and His-347 each contribute to the Zn(2+) site. 7 residues coordinate Ca(2+): Cys-392, Val-407, Asn-410, Ile-412, Glu-414, Glu-417, and Asp-420. A Disintegrin domain is found at 405–491 (PAVCGNEIWE…ECPRNEFQRN (87 aa)). 14 disulfides stabilise this stretch: Cys-408–Cys-437, Cys-419–Cys-432, Cys-421–Cys-427, Cys-431–Cys-454, Cys-445–Cys-451, Cys-450–Cys-476, Cys-463–Cys-483, Cys-470–Cys-502, Cys-495–Cys-507, Cys-514–Cys-567, Cys-529–Cys-578, Cys-542–Cys-555, Cys-562–Cys-604, and Cys-598–Cys-609. The D/ECD-tripeptide signature appears at 469 to 471 (DCD). Residues Asp-471, Val-472, and Asn-486 each coordinate Ca(2+). Asn-497 carries N-linked (GlcNAc...) asparagine glycosylation.

The protein belongs to the venom metalloproteinase (M12B) family. P-III subfamily. P-IIIa sub-subfamily. In terms of assembly, monomer. Requires Zn(2+) as cofactor. Expressed by the venom gland.

The protein resides in the secreted. Functionally, snake venom zinc metalloproteinase that catalyzes the conversion of prothrombin (F2) to alpha-thrombin through formation of a thrombin intermediate, thereby functioning as a procoagulant protein. Has a low Km for prothrombin and a high kcat. Cleaves the 320-Arg-Ile-321 bond in prothrombin and produces meizothrombin which is ultimately converted to alpha-thrombin by autolysis. The polypeptide is Zinc metalloproteinase-disintegrin-like ecarin (Echis carinatus (Saw-scaled viper)).